A 184-amino-acid chain; its full sequence is Peptidyl-tRNA hydrolase (184 aa).

Residue tyrosine 13 participates in tRNA binding. Histidine 18 acts as the Proton acceptor in catalysis. The tRNA site is built by phenylalanine 59, asparagine 61, and asparagine 105.

The protein belongs to the PTH family. In terms of assembly, monomer.

It is found in the cytoplasm. The catalysed reaction is an N-acyl-L-alpha-aminoacyl-tRNA + H2O = an N-acyl-L-amino acid + a tRNA + H(+). Hydrolyzes ribosome-free peptidyl-tRNAs (with 1 or more amino acids incorporated), which drop off the ribosome during protein synthesis, or as a result of ribosome stalling. Its function is as follows. Catalyzes the release of premature peptidyl moieties from peptidyl-tRNA molecules trapped in stalled 50S ribosomal subunits, and thus maintains levels of free tRNAs and 50S ribosomes. This chain is Peptidyl-tRNA hydrolase, found in Sulfurimonas denitrificans (strain ATCC 33889 / DSM 1251) (Thiomicrospira denitrificans (strain ATCC 33889 / DSM 1251)).